Consider the following 204-residue polypeptide: Ribosomal RNA small subunit methyltransferase J (204 aa).

Residues arginine 55–aspartate 56, glutamate 71–arginine 72, and aspartate 123 each bind S-adenosyl-L-methionine.

It belongs to the methyltransferase superfamily. RsmJ family.

The protein resides in the cytoplasm. It carries out the reaction guanosine(1516) in 16S rRNA + S-adenosyl-L-methionine = N(2)-methylguanosine(1516) in 16S rRNA + S-adenosyl-L-homocysteine + H(+). Its function is as follows. Specifically methylates the guanosine in position 1516 of 16S rRNA. The protein is Ribosomal RNA small subunit methyltransferase J of Rhodopseudomonas palustris (strain ATCC BAA-98 / CGA009).